A 1898-amino-acid chain; its full sequence is Receptor-type tyrosine-protein phosphatase F (1898 aa).

The signal sequence occupies residues 1-29 (MTPEPAPGRTMVPLVPALVMLGLVAGAHG). At 30 to 1254 (DSKPVFVKVP…QQQEEPELLW (1225 aa)) the chain is on the extracellular side. 3 Ig-like C2-type domains span residues 33-123 (PVFV…AKLS), 135-224 (PSID…ANLY), and 232-314 (PRFS…AQVT). Cysteines 54 and 107 form a disulfide. Heparin is bound at residue 68–77 (KKGKKVSSQR). N-linked (GlcNAc...) asparagine glycosylation is present at Asn-117. Cys-156 and Cys-207 form a disulfide bridge. N-linked (GlcNAc...) asparagine glycosylation is found at Asn-250 and Asn-295. An intrachain disulfide couples Cys-253 to Cys-298. 8 Fibronectin type-III domains span residues 321–411 (PPID…TGEQ), 416–510 (PPRR…TQQG), 514–604 (QPAD…TAQS), 609–706 (PPQK…TDED), 711–810 (PPRK…TTGA), 811–905 (VPGR…PEDV), 909–1001 (FPQN…TMPV), and 1005–1089 (FAKN…TAPD). Residues 399 to 418 (PPSEAVRARTGEQAPSSPPR) are disordered. The interval 693–713 (GPESSPVLVRTDEDVPSGPPR) is disordered. N-linked (GlcNAc...) asparagine glycosylation occurs at Asn-721. Residues Asn-941 and Asn-957 are each glycosylated (N-linked (GlcNAc...) asparagine). A helical transmembrane segment spans residues 1255–1275 (VTGPVLAVILIVLIVIAILLF). At 1276–1898 (KRKRTHSPSS…YLGSFDHYAT (623 aa)) the chain is on the cytoplasmic side. Ser-1296 carries the phosphoserine modification. Tyrosine-protein phosphatase domains follow at residues 1343–1598 (FSQE…LLEA) and 1630–1889 (MELE…ALEY). Residues Asp-1507, 1539–1545 (CSAGVGR), and Gln-1583 each bind substrate. The active-site Phosphocysteine intermediate is Cys-1539. Cys-1830 acts as the Phosphocysteine intermediate in catalysis.

This sequence belongs to the protein-tyrosine phosphatase family. Receptor class 2A subfamily. In terms of assembly, interacts with GRIP1. Interacts with PPFIA1, PPFIA2 and PPFIA3. Interacts with INSR.

The protein resides in the membrane. The catalysed reaction is O-phospho-L-tyrosyl-[protein] + H2O = L-tyrosyl-[protein] + phosphate. Functionally, possible cell adhesion receptor. It possesses an intrinsic protein tyrosine phosphatase activity (PTPase) and dephosphorylates EPHA2 regulating its activity. In terms of biological role, the first PTPase domain has enzymatic activity, while the second one seems to affect the substrate specificity of the first one. This chain is Receptor-type tyrosine-protein phosphatase F (PTPRF), found in Bos taurus (Bovine).